The sequence spans 138 residues: Phospholipase A2 homolog mojave toxin acidic chain (138 aa).

The signal sequence occupies residues 1–40 (MRALWIVAVLLVGVEGSLVEFETLIMKIAGRSGISYYSSY). Intrachain disulfides connect Cys42–Cys131, Cys44–Cys60, Cys59–Cys111, Cys65–Cys138, Cys66–Cys104, Cys73–Cys97, and Cys91–Cys102. The propeptide occupies 81 to 83 (TYR). A Pyrrolidone carboxylic acid modification is found at Gln84. Residues 120 to 126 (DYKYLRF) constitute a propeptide that is removed on maturation.

The protein belongs to the phospholipase A2 family. Group II subfamily. D49 sub-subfamily. As to quaternary structure, heterodimer of an acidic and a basic chain. The acidic subunit is non-toxic, without enzymatic activity and comprises 3 peptides that are cross-linked by 5 disulfide bridges. The basic subunit is toxic, has phospholipase A2 activity and is composed of a single chain. Requires Ca(2+) as cofactor. As to expression, expressed by the venom gland.

It localises to the secreted. In terms of biological role, snake venom phospholipase A2 (PLA2) that inhibits neuromuscular transmission by blocking acetylcholine release from the nerve termini. This Crotalus scutulatus scutulatus (Mojave rattlesnake) protein is Phospholipase A2 homolog mojave toxin acidic chain.